A 576-amino-acid polypeptide reads, in one-letter code: Arginine--tRNA ligase (576 aa).

Residues 126-136 (ANPTGPMHIGH) carry the 'HIGH' region motif.

The protein belongs to the class-I aminoacyl-tRNA synthetase family. In terms of assembly, monomer.

The protein localises to the cytoplasm. It carries out the reaction tRNA(Arg) + L-arginine + ATP = L-arginyl-tRNA(Arg) + AMP + diphosphate. The polypeptide is Arginine--tRNA ligase (Rickettsia bellii (strain OSU 85-389)).